We begin with the raw amino-acid sequence, 964 residues long: SKI family transcriptional corepressor 1 (964 aa).

Disordered regions lie at residues 45 to 72, 278 to 365, 414 to 461, 525 to 587, 610 to 768, and 794 to 842; these read TQLG…SSAL, RTFS…GGSA, AGEP…WGHQ, AGGG…RKSS, REAY…GAAK, and LCTP…EDGL. The span at 283-310 shows a compositional bias: gly residues; that stretch reads QGGGGGGANSGSGGAGKGGAGGGGGPGC. The segment covering 345 to 355 has biased composition (low complexity); it reads ALGLAAAASGP. Composition is skewed to gly residues over residues 356-365 and 417-440; these read AGPGGPGGSA and PKGG…GPGA. The segment covering 571 to 583 has biased composition (pro residues); it reads SLGPLPPPPPPPA. A compositionally biased stretch (acidic residues) spans 652 to 661; it reads DTADEPEVDV. Basic and acidic residues predominate over residues 798-808; that stretch reads ETHEPDKEDNH. Residues 823-834 show a composition bias toward polar residues; the sequence is DQRSVSQPSPAN. Positions 853–921 form a coiled coil; the sequence is EKDIENLARE…DTLCNELDQE (69 aa).

This sequence belongs to the SKI family. Interacts with SMAD1, SMAD2 and SMAD3. Interacts with LBX1. Expressed in brain with higher levels in embryo than adult. Expressed by migratory precursors of Purkinje cells in the postnatal brain. Also expressed in adult testis.

The protein resides in the nucleus. Functionally, inhibits BMP signaling. Acts as a transcriptional corepressor of LBX1. The protein is SKI family transcriptional corepressor 1 (Skor1) of Mus musculus (Mouse).